The sequence spans 467 residues: MSKAKTLYEKIYDAHVVVAAPGETPILYIDRHLVHEVTSPQAFDGLREKGRPVRQVSKTFATMDHNVSTTTKDINASGEMARIQMQTLSKNCEEFGVTLYDINHKYQGIVHVMGPELGITLPGMTIVCGDSHTATHGAFGSLAFGIGTSEVEHVLATQTLKQGRAKTMKIEVRGKVAPGITAKDIVLAIIGKTTAAGGTGYVVEFCGEAIRDLSMEGRMTVCNMAIELGAKAGLIAPDATTFNYIKGRKFAPQGSDWDAAVDYWQTLKTDEDAQFDAVVTLEASEIKPQVTWGTNPGQVIAVDEPIPSPSQFADPVERSSAEKALAYMGLEAGKMLSDYKVDKVFVGSCTNSRIEDMRAAAAVAKGKKVASHVQALIVPGSEQVKAQAEAEGLDKIFIEAGFEWRLPGCSMCLAMNNDRLGPGERCASTSNRNFEGRQGRDGRTHLVSPAMAAAAAIAGHFVDIRQF.

[4Fe-4S] cluster contacts are provided by Cys-349, Cys-409, and Cys-412.

Belongs to the aconitase/IPM isomerase family. LeuC type 1 subfamily. As to quaternary structure, heterodimer of LeuC and LeuD. It depends on [4Fe-4S] cluster as a cofactor.

It catalyses the reaction (2R,3S)-3-isopropylmalate = (2S)-2-isopropylmalate. It participates in amino-acid biosynthesis; L-leucine biosynthesis; L-leucine from 3-methyl-2-oxobutanoate: step 2/4. Catalyzes the isomerization between 2-isopropylmalate and 3-isopropylmalate, via the formation of 2-isopropylmaleate. The protein is 3-isopropylmalate dehydratase large subunit of Vibrio cholerae serotype O1 (strain ATCC 39541 / Classical Ogawa 395 / O395).